The chain runs to 682 residues: Potassium-transporting ATPase ATP-binding subunit (682 aa).

Transmembrane regions (helical) follow at residues 34–54 (PVMF…IAMA), 62–82 (ALFS…ANFA), 219–239 (IALT…TATL), and 254–274 (VLVA…LSAI). D307 serves as the catalytic 4-aspartylphosphate intermediate. ATP contacts are provided by residues D344, E348, 377-384 (FTAQSRMS), and K395. The Mg(2+) site is built by D518 and D522. Helical transmembrane passes span 588–608 (FAII…LNIM), 616–636 (AILS…PLAL), and 656–676 (IYGL…DLLL).

This sequence belongs to the cation transport ATPase (P-type) (TC 3.A.3) family. Type IA subfamily. As to quaternary structure, the system is composed of three essential subunits: KdpA, KdpB and KdpC.

Its subcellular location is the cell inner membrane. It catalyses the reaction K(+)(out) + ATP + H2O = K(+)(in) + ADP + phosphate + H(+). Functionally, part of the high-affinity ATP-driven potassium transport (or Kdp) system, which catalyzes the hydrolysis of ATP coupled with the electrogenic transport of potassium into the cytoplasm. This subunit is responsible for energy coupling to the transport system and for the release of the potassium ions to the cytoplasm. The chain is Potassium-transporting ATPase ATP-binding subunit from Escherichia coli O157:H7 (strain EC4115 / EHEC).